A 365-amino-acid polypeptide reads, in one-letter code: Transcription factor KUA1 (365 aa).

Residues 1–21 (MTRRCSHCNHNGHNSRTCPNR) form a disordered region. The CCHC-type zinc-finger motif lies at 3–20 (RRCSHCNHNGHNSRTCPN). The segment covering 8–18 (CNHNGHNSRTC) has biased composition (polar residues). Positions 24 to 28 (KLFGV) match the R/KLFGV (transcriptional repression) motif. A disordered region spans residues 41–99 (MGNLSHYTGSGSGGHGTGSNTPGSPGDVPDHVAGDGYASEDFVAGSSSSRERKKGTPWT). In terms of domain architecture, HTH myb-type spans 90–146 (RERKKGTPWTEEEHRMFLLGLQKLGKGDWRGISRNYVTTRTPTQVASHAQKYFIRQS). The segment at residues 118–142 (WRGISRNYVTTRTPTQVASHAQKYF) is a DNA-binding region (H-T-H motif). Disordered stretches follow at residues 214–254 (SMDS…QPQL) and 321–365 (ESNK…IHAL). Low complexity predominate over residues 220–254 (STTGEPTATAAAASSSSRLEETTQLQSQLQPQPQL). A compositionally biased stretch (polar residues) spans 343–355 (RQSAFHPNPSSDS).

Expressed ubiquitously, except in hypocotyls, root tips and lateral root primordia.

Its subcellular location is the nucleus. Functionally, transcriptional repressor. Direct regulator of the transcription of peroxidase (Prxs) and reactive oxygen species (ROS)-related genes via the recognition of 5'-ATCACA-3' motif. Binds to 5'-TATCCA-3' motif (TA box) and represses the activity of corresponding promoters (e.g. sugar response genes). Regulates hypocotyl elongation in response to darkness by enhancing auxin accumulation in a phytochrome-interacting factor (PIF) proteins-dependent manner. Promotes lateral roots formation. Promotes cell expansion during leaves development via the modulation of cell wall-located Prxs. Plays a critical role in developmentally regulated and dark-induced onset of leaf senescence by repressing the transcription of several genes involved in chloroplast function and responses to light and auxin. Promotes responses to auxin, abscisic acid (ABA), and ethylene. This chain is Transcription factor KUA1, found in Arabidopsis thaliana (Mouse-ear cress).